Here is a 729-residue protein sequence, read N- to C-terminus: Neurochondrin (729 aa).

Ser2 is subject to N-acetylserine. A Phosphoserine modification is found at Ser2. At Ser2 the chain carries N-acetylalanine. 2 S-palmitoyl cysteine lipidation sites follow: Cys3 and Cys4. Residue Arg75 is modified to Asymmetric dimethylarginine. Ser448 bears the Phosphoserine mark.

The protein belongs to the neurochondrin family. In terms of assembly, interacts with MCHR1. Interacts with SEMA4C. Interacts with DIAPH1 (via FH3 domain). Interacts with GRM5. Palmitoylated. Palmitoylation by ZDHHC1, ZDHHC3 and ZDHHC11 regulates the association of NCDN with endosome membranes. May also be palmitoylated by ZDHHC7. Abundantly expressed in whole adult brain and in all individual brain regions examined, including spinal cord. Weakly expressed in ovary, testis, fetal brain and small intestine.

The protein localises to the cytoplasm. The protein resides in the cytosol. Its subcellular location is the endosome membrane. It localises to the cell projection. It is found in the dendrite. The protein localises to the postsynapse. In terms of biological role, probably involved in signal transduction in the nervous system, via increasing cell surface localization of GRM5/mGluR5 and positively regulating its signaling. Required for the spatial learning process. Acts as a negative regulator of Ca(2+)-calmodulin-dependent protein kinase 2 (CaMK2) phosphorylation. May play a role in modulating melanin-concentrating hormone-mediated functions via its interaction with MCHR1 that interferes with G protein-coupled signal transduction. May be involved in bone metabolism. May also be involved in neurite outgrowth. This Homo sapiens (Human) protein is Neurochondrin.